Here is a 617-residue protein sequence, read N- to C-terminus: Na(+)/H(+) antiporter NhaA 1 (617 aa).

Residues 1-433 (MTVTEQTTAR…GWAIFRITDW (433 aa)) form a na(+)/H(+) antiporter NhaA region. 11 helical membrane-spanning segments follow: residues 33-53 (AAALLLTFTVIAILWANSPWA), 75-95 (MTVKHLVNDALMTFFFFIVGL), 113-133 (AVPVVAAAAGLIVPAIVFLAF), 141-161 (HAWGVVISTDTAFLVGALAII), 171-191 (LFLLTLAVVDDVGALVAIAVF), 194-214 (DAIQVGPLVVAVAVLVALALV), 234-254 (VALYLAGIHPTLAGVAVALLI), 304-324 (VGPAVSFVILPLFALVNAGVL), 340-360 (WGVVAGLVIGKFVGITGATWL), 378-398 (IAGGAALSGIGFTISLFIVDI), and 411-431 (IGVLAASVLAFVFGWAIFRIT). Positions 434–617 (LSPPEPVGLK…LIRALEAGRR (184 aa)) constitute a Thioredoxin domain.

It in the N-terminal section; belongs to the NhaA Na(+)/H(+) (TC 2.A.33) antiporter family.

The protein localises to the cell membrane. It catalyses the reaction Na(+)(in) + 2 H(+)(out) = Na(+)(out) + 2 H(+)(in). Functionally, na(+)/H(+) antiporter that extrudes sodium in exchange for external protons. The chain is Na(+)/H(+) antiporter NhaA 1 from Mycolicibacterium vanbaalenii (strain DSM 7251 / JCM 13017 / BCRC 16820 / KCTC 9966 / NRRL B-24157 / PYR-1) (Mycobacterium vanbaalenii).